The sequence spans 195 residues: NADH-quinone oxidoreductase subunit B (195 aa).

4 residues coordinate [4Fe-4S] cluster: C74, C75, C139, and C169.

Belongs to the complex I 20 kDa subunit family. In terms of assembly, NDH-1 is composed of 14 different subunits. Subunits NuoB, C, D, E, F, and G constitute the peripheral sector of the complex. Requires [4Fe-4S] cluster as cofactor.

The protein resides in the cell inner membrane. The enzyme catalyses a quinone + NADH + 5 H(+)(in) = a quinol + NAD(+) + 4 H(+)(out). In terms of biological role, NDH-1 shuttles electrons from NADH, via FMN and iron-sulfur (Fe-S) centers, to quinones in the respiratory chain. The immediate electron acceptor for the enzyme in this species is believed to be ubiquinone. Couples the redox reaction to proton translocation (for every two electrons transferred, four hydrogen ions are translocated across the cytoplasmic membrane), and thus conserves the redox energy in a proton gradient. The chain is NADH-quinone oxidoreductase subunit B from Methylorubrum populi (strain ATCC BAA-705 / NCIMB 13946 / BJ001) (Methylobacterium populi).